The sequence spans 265 residues: Capsule polysaccharide export inner-membrane protein CtrC (265 aa).

A run of 6 helical transmembrane segments spans residues 37 to 57 (IGFLWLFVEPLLLTLVMVLMW), 64 to 84 (NVSALNIVAFTLTGYPMMMMW), 121 to 141 (IAGATIAQVVIMFALVIIGWI), 147 to 167 (IFYMLLAWLLMAMFAVGLGLV), 178 to 198 (FGKVWSTISFVMMPLSGVFFF), and 236 to 256 (NPWYILLCNLVLLLLGLAVVA). The ABC transmembrane type-2 domain occupies 37–258 (IGFLWLFVEP…LLGLAVVARF (222 aa)).

The protein belongs to the ABC-2 integral membrane protein family.

It localises to the cell inner membrane. Functionally, may form an ATP-driven capsule polysaccharide export apparatus, in association with the CtrB and CtrD proteins. In Neisseria meningitidis serogroup A / serotype 4A (strain DSM 15465 / Z2491), this protein is Capsule polysaccharide export inner-membrane protein CtrC (ctrC).